A 324-amino-acid polypeptide reads, in one-letter code: tRNA dimethylallyltransferase (324 aa).

Residue 17–24 (GPTASGKT) participates in ATP binding. Position 19–24 (19–24 (TASGKT)) interacts with substrate. Interaction with substrate tRNA stretches follow at residues 42 to 45 (DSAL), 166 to 170 (QRIQR), and 251 to 256 (RCVGYR).

Belongs to the IPP transferase family. As to quaternary structure, monomer. It depends on Mg(2+) as a cofactor.

The catalysed reaction is adenosine(37) in tRNA + dimethylallyl diphosphate = N(6)-dimethylallyladenosine(37) in tRNA + diphosphate. Its function is as follows. Catalyzes the transfer of a dimethylallyl group onto the adenine at position 37 in tRNAs that read codons beginning with uridine, leading to the formation of N6-(dimethylallyl)adenosine (i(6)A). The protein is tRNA dimethylallyltransferase of Burkholderia thailandensis (strain ATCC 700388 / DSM 13276 / CCUG 48851 / CIP 106301 / E264).